A 224-amino-acid chain; its full sequence is MGQKINPNGFRLGVIRDWESKWYADKGYKETLKEDLQIRKFISEKLKDASVSTVEIERAANRINISIHTAKPGMVIGKGGSEVEALRKQLNALTGKQVHINIVEIKKPDLDAELVADSIARQLEARIAFRRAMRQATQRAMLAGAKGIKVQTSGRLNGADMARREWHTEGRVPLQTLRADIDYAWVNAFTTYGEIGVQVWINRGEILPTRKNKPASKPAKGGNR.

The region spanning 38 to 106 is the KH type-2 domain; it reads IRKFISEKLK…QVHINIVEIK (69 aa).

This sequence belongs to the universal ribosomal protein uS3 family. Part of the 30S ribosomal subunit. Forms a tight complex with proteins S10 and S14.

In terms of biological role, binds the lower part of the 30S subunit head. Binds mRNA in the 70S ribosome, positioning it for translation. The protein is Small ribosomal subunit protein uS3 of Lactobacillus acidophilus (strain ATCC 700396 / NCK56 / N2 / NCFM).